The sequence spans 828 residues: Glycerol-3-phosphate acyltransferase (828 aa).

The HXXXXD motif motif lies at 310-315 (HRSHID).

Belongs to the GPAT/DAPAT family.

It is found in the cell inner membrane. It carries out the reaction sn-glycerol 3-phosphate + an acyl-CoA = a 1-acyl-sn-glycero-3-phosphate + CoA. It participates in phospholipid metabolism; CDP-diacylglycerol biosynthesis; CDP-diacylglycerol from sn-glycerol 3-phosphate: step 1/3. The chain is Glycerol-3-phosphate acyltransferase from Pseudomonas putida (strain ATCC 47054 / DSM 6125 / CFBP 8728 / NCIMB 11950 / KT2440).